The primary structure comprises 286 residues: MSDLSVLSPFAVPLAAVLGLLVGSFLNVVIYRVPVMMERGWTVFAKEHLNLPLTDDESRTFNLMKPDSCCPKCRVPIRAWQNIPIVSYLLLRGKCASCQTKISIRYPLIELLTGVLFGLVAWQYGWSWITLGGLILTAFLISLTFIDADTQYLPDSMTLPLIWLGLIFNLDGGFVPLQSAVLGAVAGYSSLWLLCAVYKLLTGKTGMGNGDFKLIAALGAWLGISALPVLIFVSSLIGLVAAIVMRVAKGRHFAFGPALTVSGWIIFTANDSVWRAVNWWLTHPVR.

A helical membrane pass occupies residues 10–30 (FAVPLAAVLGLLVGSFLNVVI). Cys-70, Cys-73, Cys-95, and Cys-98 together coordinate Zn(2+). 6 helical membrane-spanning segments follow: residues 102-122 (ISIR…LVAW), 126-146 (WSWI…LTFI), 157-177 (MTLP…FVPL), 181-201 (VLGA…YKLL), 224-244 (ISAL…AAIV), and 250-270 (GRHF…FTAN).

Belongs to the peptidase A24 family. Requires Zn(2+) as cofactor.

The protein resides in the cell inner membrane. The catalysed reaction is Typically cleaves a -Gly-|-Phe- bond to release an N-terminal, basic peptide of 5-8 residues from type IV prepilin, and then N-methylates the new N-terminal amino group, the methyl donor being S-adenosyl-L-methionine.. Functionally, plays an essential role in type IV pili and type II pseudopili formation by proteolytically removing the leader sequence from substrate proteins and subsequently monomethylating the alpha-amino group of the newly exposed N-terminal phenylalanine. The chain is Prepilin leader peptidase/N-methyltransferase (pilD) from Neisseria gonorrhoeae.